A 224-amino-acid polypeptide reads, in one-letter code: ATP phosphoribosyltransferase (224 aa).

This sequence belongs to the ATP phosphoribosyltransferase family. Short subfamily. In terms of assembly, heteromultimer composed of HisG and HisZ subunits.

The protein localises to the cytoplasm. It catalyses the reaction 1-(5-phospho-beta-D-ribosyl)-ATP + diphosphate = 5-phospho-alpha-D-ribose 1-diphosphate + ATP. The protein operates within amino-acid biosynthesis; L-histidine biosynthesis; L-histidine from 5-phospho-alpha-D-ribose 1-diphosphate: step 1/9. Functionally, catalyzes the condensation of ATP and 5-phosphoribose 1-diphosphate to form N'-(5'-phosphoribosyl)-ATP (PR-ATP). Has a crucial role in the pathway because the rate of histidine biosynthesis seems to be controlled primarily by regulation of HisG enzymatic activity. This Cupriavidus necator (strain ATCC 17699 / DSM 428 / KCTC 22496 / NCIMB 10442 / H16 / Stanier 337) (Ralstonia eutropha) protein is ATP phosphoribosyltransferase.